The chain runs to 185 residues: Keratin-associated protein 4-8 (185 aa).

25 repeat units span residues 14–18, 19–23, 24–28, 39–43, 44–48, 49–53, 54–58, 59–63, 64–68, 69–73, 74–78, 79–83, 84–88, 89–93, 94–98, 99–103, 104–108, 109–113, 114–118, 119–123, 124–128, 134–138, 139–143, 144–148, and 149–164. Positions 14 to 164 are 25 X 5 AA repeats of C-C-[IKRQVHEC]-[SPRT]-[STCVQPR]; the sequence is GCGQDLCQET…CGRVSCHTTC (151 aa).

The protein belongs to the KRTAP type 4 family. Interacts with hair keratins. Expressed in the hair follicles.

Functionally, in the hair cortex, hair keratin intermediate filaments are embedded in an interfilamentous matrix, consisting of hair keratin-associated proteins (KRTAP), which are essential for the formation of a rigid and resistant hair shaft through their extensive disulfide bond cross-linking with abundant cysteine residues of hair keratins. The matrix proteins include the high-sulfur and high-glycine-tyrosine keratins. The chain is Keratin-associated protein 4-8 (KRTAP4-8) from Homo sapiens (Human).